The following is a 203-amino-acid chain: Probable Tat proofreading chaperone DmsD (203 aa).

Belongs to the TorD/DmsD family. DmsD subfamily.

Functionally, required for biogenesis/assembly of DMSO reductase, but not for the interaction of the DmsA signal peptide with the Tat system. May be part of a chaperone cascade complex that facilitates a folding-maturation pathway for the substrate protein. The sequence is that of Probable Tat proofreading chaperone DmsD from Haemophilus influenzae (strain ATCC 51907 / DSM 11121 / KW20 / Rd).